The following is a 490-amino-acid chain: UDP-glycosyltransferase 84A1 (490 aa).

His30 serves as the catalytic Proton acceptor. Position 30 (His30) interacts with an anthocyanidin. UDP-alpha-D-glucose-binding residues include Gln358, His373, Trp376, Asn377, Ser378, and Glu381. Gly396 is a binding site for an anthocyanidin. 2 residues coordinate UDP-alpha-D-glucose: Asp397 and Gln398.

Belongs to the UDP-glycosyltransferase family. As to expression, expressed in roots, flowers and siliques.

The enzyme catalyses (E)-4-coumarate + UDP-alpha-D-glucose = 4-O-(beta-D-glucosyl)-trans-4-coumarate + UDP + H(+). It carries out the reaction (E)-ferulate + UDP-alpha-D-glucose = 1-O-[(E)-feruloyl]-beta-D-glucose + UDP. It catalyses the reaction (E)-caffeate + UDP-alpha-D-glucose = 1-O-[(E)-caffeoyl]-beta-D-glucose + UDP. The catalysed reaction is (E)-sinapate + UDP-alpha-D-glucose = 1-O-(trans-sinapoyl)-beta-D-glucose + UDP. The enzyme catalyses (E)-cinnamate + UDP-alpha-D-glucose = 1-O-(trans-cinnamoyl)-beta-D-glucose + UDP. UDP-glucosyltransferase that forms glucose esters with phenylpropanoids. Glucosylates 4-coumarate, ferulate, caffeate, sinapate and cinnamate. Can glucosylate the phytotoxic xenobiotic compound 2,4,5-trichlorophenol (TCP). This Arabidopsis thaliana (Mouse-ear cress) protein is UDP-glycosyltransferase 84A1.